A 366-amino-acid chain; its full sequence is Anthranilate phosphoribosyltransferase (366 aa).

5-phospho-alpha-D-ribose 1-diphosphate-binding positions include Gly103, 106–107 (GD), Thr111, 113–116 (NLST), 131–139 (KHGNRASSS), and Gly143. An anthranilate-binding site is contributed by Gly103. Ser115 lines the Mg(2+) pocket. Asn134 contributes to the anthranilate binding site. An anthranilate-binding site is contributed by Arg189. Residues Asp247 and Glu248 each coordinate Mg(2+).

It belongs to the anthranilate phosphoribosyltransferase family. As to quaternary structure, homodimer. Mg(2+) serves as cofactor.

It catalyses the reaction N-(5-phospho-beta-D-ribosyl)anthranilate + diphosphate = 5-phospho-alpha-D-ribose 1-diphosphate + anthranilate. Its pathway is amino-acid biosynthesis; L-tryptophan biosynthesis; L-tryptophan from chorismate: step 2/5. Functionally, catalyzes the transfer of the phosphoribosyl group of 5-phosphorylribose-1-pyrophosphate (PRPP) to anthranilate to yield N-(5'-phosphoribosyl)-anthranilate (PRA). The sequence is that of Anthranilate phosphoribosyltransferase from Mycobacterium leprae (strain Br4923).